An 84-amino-acid polypeptide reads, in one-letter code: Small ribosomal subunit protein uS17 (84 aa).

It belongs to the universal ribosomal protein uS17 family. Part of the 30S ribosomal subunit.

In terms of biological role, one of the primary rRNA binding proteins, it binds specifically to the 5'-end of 16S ribosomal RNA. The protein is Small ribosomal subunit protein uS17 of Thermoanaerobacter pseudethanolicus (strain ATCC 33223 / 39E) (Clostridium thermohydrosulfuricum).